We begin with the raw amino-acid sequence, 886 residues long: Alanine--tRNA ligase (886 aa).

Residues histidine 570, histidine 574, cysteine 672, and histidine 676 each coordinate Zn(2+).

Belongs to the class-II aminoacyl-tRNA synthetase family. The cofactor is Zn(2+).

The protein localises to the cytoplasm. It catalyses the reaction tRNA(Ala) + L-alanine + ATP = L-alanyl-tRNA(Ala) + AMP + diphosphate. Its function is as follows. Catalyzes the attachment of alanine to tRNA(Ala) in a two-step reaction: alanine is first activated by ATP to form Ala-AMP and then transferred to the acceptor end of tRNA(Ala). Also edits incorrectly charged Ser-tRNA(Ala) and Gly-tRNA(Ala) via its editing domain. In Acidothermus cellulolyticus (strain ATCC 43068 / DSM 8971 / 11B), this protein is Alanine--tRNA ligase.